Here is a 256-residue protein sequence, read N- to C-terminus: Protein Ta0487 (256 aa).

It belongs to the CinA family.

The sequence is that of Protein Ta0487 from Thermoplasma acidophilum (strain ATCC 25905 / DSM 1728 / JCM 9062 / NBRC 15155 / AMRC-C165).